A 275-amino-acid polypeptide reads, in one-letter code: NAC domain-containing protein 2 (275 aa).

Residues 10–162 (LPPGFRFHPT…DWVLCRIYKK (153 aa)) enclose the NAC domain. Residues 107–168 (VGIKKALVFY…IYKKKNLERA (62 aa)) mediate DNA binding.

As to expression, expressed in roots, stem, flowers, and leaves.

It localises to the nucleus. In terms of biological role, transcription factor that binds DNA motifs 5'-CGT[AG](5N)NACG[ACT][AC][AT][ACG][ACT]-3' and 5'-CACG[ACT][AC][AT][AGT][CT]-3' in target genes promoters. Promotes leaf senescence (developmental, light-induced and ABA-induced senescence) and regulates fruit yield and sugar content, probably by establishing abscisic acid (ABA) homeostasis. Activates the expression of senescence and ABA associated genes including NCED1, ABCG40, CYP707A2, SAG113, SGR1 and PAO, by directly binding to their promoters. This is NAC domain-containing protein 2 from Solanum lycopersicum (Tomato).